A 768-amino-acid chain; its full sequence is MAGCPKGSWTPRLRSVILGGAQLIWFSALISELVNQKEVAAWTYNYSTKAYSWNNSRVFCRRHFTDLVAIQNKNEIAHLNDVIPFFNSYYWIGIRKINNKWTWVGTNKTLTEEAENWADNEPNNKKNNQDCVEIYIKSNSAPGKWNDEPCFKRKRALCYTASCQDMSCSNQGECIETIGSYTCSCYPGFYGPECEYVKECGKVNIPQHVLMNCSHPLGEFSFNSQCTFSCAEGYELDGPGELQCLASGIWTNNPPKCDAVQCQSLEAPPHGTMACMHPIAAFAYDSSCKFECQPGYRARGSNTLHCTGSGQWSEPLPTCEAIACEPPEIPIHGSMDCVPSTGTFGYNSSCTFLCAEGFVLKGNDAIQCADSGQWTAPAPFCEALQCPEFPVPSKAQVNCSDPFGTLTYQSVCSFSCDEGSLLVGASVIRCLATGHWNGAPPECQAVSCAPMLSPENGSMTCVQPLGNSTYKSTCQFMCDEGFYLSGPERLDCSPSGHWTGTPPTCEAIKCPGIFAPEQGNLDCSHVHGEFGVGSICHFSCNEDFELLGSENVECTVSGRWSAPPPTCKGITSLPAPAVRCPALTTPGQGTMSCQHHLGSFGPNTTCYFGCKTGFTLRGANSLRCRASGQWTAVTPMCRAVKCSELHMDTAVAMNCSNPWGNFSYGSTCTFQCPEGQSLNGSVRATCREDGHWSDAMPTCQAGTLTIQEALTYLGGAVASTTGLAVGGTLLALLRKRLRKKDDGKCPLNPHSHLGTYGVFTNAAYDPTP.

Residues 1–41 (MAGCPKGSWTPRLRSVILGGAQLIWFSALISELVNQKEVAA) form the signal peptide. At 42–709 (WTYNYSTKAY…QAGTLTIQEA (668 aa)) the chain is on the extracellular side. A C-type lectin domain is found at 58–158 (VFCRRHFTDL…PCFKRKRALC (101 aa)). Disulfide bonds link Cys60/Cys158, Cys131/Cys150, Cys163/Cys174, Cys168/Cys183, Cys185/Cys194, Cys200/Cys244, Cys230/Cys257, Cys262/Cys306, Cys292/Cys319, Cys324/Cys368, Cys354/Cys381, Cys386/Cys430, Cys416/Cys443, Cys448/Cys492, Cys478/Cys505, Cys510/Cys554, Cys540/Cys567, Cys580/Cys624, Cys610/Cys637, Cys642/Cys686, and Cys672/Cys699. Residues Glu121, Asn123, and Asn124 each coordinate Ca(2+). Position 123 (Asn123) interacts with a carbohydrate. Positions 133 and 146 each coordinate a carbohydrate. Asn146 and Asp147 together coordinate Ca(2+). Residues 159-195 (YTASCQDMSCSNQGECIETIGSYTCSCYPGFYGPECE) enclose the EGF-like domain. Sushi domains are found at residues 198–259 (KECG…KCDA), 260–321 (VQCQ…TCEA), 322–383 (IACE…FCEA), 384–445 (LQCP…ECQA), 446–507 (VSCA…TCEA), 508–569 (IKCP…TCKG), 578–639 (VRCP…MCRA), and 640–701 (VKCS…TCQA). Residue Asn398 is glycosylated (N-linked (GlcNAc...) asparagine). Residue Asn603 is glycosylated (N-linked (GlcNAc...) asparagine). 3 N-linked (GlcNAc...) asparagine glycosylation sites follow: Asn654, Asn661, and Asn679. The chain crosses the membrane as a helical span at residues 710–733 (LTYLGGAVASTTGLAVGGTLLALL). The Cytoplasmic portion of the chain corresponds to 734 to 768 (RKRLRKKDDGKCPLNPHSHLGTYGVFTNAAYDPTP). Cys745 carries the S-palmitoyl cysteine; alternate lipid modification. A lipid anchor (S-stearoyl cysteine; alternate) is attached at Cys745. An Endocytosis signal motif is present at residues 756-759 (YGVF). Residues 759-768 (FTNAAYDPTP) form an interaction with SNX17 region.

It belongs to the selectin/LECAM family. As to quaternary structure, interacts with SNX17. Interacts with SELPLG/PSGL1 and PODXL2 and mediates neutrophil adhesion and leukocyte rolling. This interaction requires the sialyl-Lewis X epitope of SELPLG and PODXL2, and specific tyrosine sulfation on SELPLG. Interacts (via C-type lectin domain) with alpha-IIb/beta3 integrin ITGA2B:ITGB3 and alpha-V/beta-3 integrin ITGAV:ITGB3. Interacts with alpha5/beta1 integrin ITGA5:ITGB1 and alpha4/beta1 integrin ITGA4:ITGB. As to expression, stored in the alpha-granules of platelets and Weibel-Palade bodies of endothelial cells. Upon cell activation by agonists, P-selectin is transported rapidly to the cell surface.

It is found in the cell membrane. In terms of biological role, ca(2+)-dependent receptor for myeloid cells that binds to carbohydrates on neutrophils and monocytes. Mediates the interaction of activated endothelial cells or platelets with leukocytes. The ligand recognized is sialyl-Lewis X. Mediates rapid rolling of leukocyte rolling over vascular surfaces during the initial steps in inflammation through interaction with SELPLG. Mediates cell-cell interactions and cell adhesion via the interaction with integrin alpha-IIb/beta3 (ITGA2B:ITGB3) and integrin alpha-V/beta-3 (ITGAV:ITGB3). The protein is P-selectin (Selp) of Mus musculus (Mouse).